Here is a 362-residue protein sequence, read N- to C-terminus: P2Y purinoceptor 1 (362 aa).

Topologically, residues 1-40 (MTEALISAALNGTQPELLAGGWAAGNATTKCSLTKTGFQF) are extracellular. N-linked (GlcNAc...) asparagine glycans are attached at residues Asn-11 and Asn-26. Intrachain disulfides connect Cys-31-Cys-285 and Cys-113-Cys-191. Lys-35 is an ADP binding site. A helical membrane pass occupies residues 41 to 63 (YYLPTVYILVFITGFLGNSVAIW). Over 64-76 (MFVFHMRPWSGIS) the chain is Cytoplasmic. A helical transmembrane segment spans residues 77 to 98 (VYMFNLALADFLYVLTLPALIF). Residues 99-114 (YYFNKTDWIFGDVMCK) lie on the Extracellular side of the membrane. A glycan (N-linked (GlcNAc...) asparagine) is linked at Asn-102. Residues 115–136 (LQRFIFHVNLYGSILFLTCISV) form a helical membrane-spanning segment. The Cytoplasmic segment spans residues 137-155 (HRYTGVVHPLKSLGRLKKK). Residues 156 to 177 (NAVYVSSLVWALVVAVIAPILF) traverse the membrane as a helical segment. At 178–203 (YSGTGVRRNKTITCYDTTADEYLRSY) the chain is on the extracellular side. Residue Asn-186 is glycosylated (N-linked (GlcNAc...) asparagine). 192-194 (YDT) serves as a coordination point for ADP. A helical transmembrane segment spans residues 204–226 (FVYSMCTTVFMFCIPFIVILGCY). Residues 227 to 249 (GLIVKALIYKDLDNSPLRRKSIY) lie on the Cytoplasmic side of the membrane. The chain crosses the membrane as a helical span at residues 250-273 (LVIIVLTVFAVSYLPFHVMKTLNL). ADP is bound by residues 272-276 (NLRAR), 292-295 (YATY), and Arg-299. Residues 274–292 (RARLDFQTPQMCAFNDKVY) lie on the Extracellular side of the membrane. The helical transmembrane segment at 293-314 (ATYQVTRGLASLNSCVDPILYF) threads the bilayer. The Cytoplasmic portion of the chain corresponds to 315 to 362 (LAGDTFRRRLSRATRKSSRRSEPNVQSKSEEMTLNILTEYKQNGDTSL).

It belongs to the G-protein coupled receptor 1 family. Brain, spinal cord, gastrointestinal tract, spleen and leg muscle. Is not detected in the heart, liver, stomach, lung and kidney.

The protein resides in the cell membrane. In terms of biological role, receptor for extracellular adenine nucleotides such as ADP. In platelets, binding to ADP leads to mobilization of intracellular calcium ions via activation of phospholipase C, a change in platelet shape, and ultimately platelet aggregation. This chain is P2Y purinoceptor 1 (P2RY1), found in Gallus gallus (Chicken).